A 456-amino-acid polypeptide reads, in one-letter code: Glycerol-3-phosphate acyltransferase 4 (456 aa).

The N-terminal stretch at 1–37 (MFLLLPFDSLIVSLLGISLTVLFTLLLVFIIVPAVFG) is a signal peptide. Transmembrane regions (helical) follow at residues 156–176 (ISLR…CLLL) and 180–200 (IALA…VGYL). Residue Asn247 is glycosylated (N-linked (GlcNAc...) asparagine). An HXXXXD motif motif is present at residues 248–253 (HTSPID). 3 N-linked (GlcNAc...) asparagine glycosylation sites follow: Asn327, Asn328, and Asn362.

Belongs to the 1-acyl-sn-glycerol-3-phosphate acyltransferase family.

The protein localises to the endoplasmic reticulum membrane. It carries out the reaction sn-glycerol 3-phosphate + an acyl-CoA = a 1-acyl-sn-glycero-3-phosphate + CoA. The enzyme catalyses dodecanoyl-CoA + sn-glycerol 3-phosphate = 1-dodecanoyl-sn-glycerol 3-phosphate + CoA. It catalyses the reaction sn-glycerol 3-phosphate + hexadecanoyl-CoA = 1-hexadecanoyl-sn-glycero-3-phosphate + CoA. The catalysed reaction is sn-glycerol 3-phosphate + octadecanoyl-CoA = 1-octadecanoyl-sn-glycero-3-phosphate + CoA. It carries out the reaction sn-glycerol 3-phosphate + (9Z)-octadecenoyl-CoA = 1-(9Z-octadecenoyl)-sn-glycero-3-phosphate + CoA. The enzyme catalyses (9Z,12Z)-octadecadienoyl-CoA + sn-glycerol 3-phosphate = 1-(9Z,12Z)-octadecadienoyl-sn-glycero-3-phosphate + CoA. It functions in the pathway phospholipid metabolism; CDP-diacylglycerol biosynthesis; CDP-diacylglycerol from sn-glycerol 3-phosphate: step 1/3. In terms of biological role, converts glycerol-3-phosphate to 1-acyl-sn-glycerol-3-phosphate (lysophosphatidic acid or LPA) by incorporating an acyl moiety at the sn-1 position of the glycerol backbone. Active against both saturated and unsaturated long-chain fatty acyl-CoAs. Protects cells against lipotoxicity. This chain is Glycerol-3-phosphate acyltransferase 4, found in Bos taurus (Bovine).